A 347-amino-acid polypeptide reads, in one-letter code: tRNA N6-adenosine threonylcarbamoyltransferase (347 aa).

Fe cation is bound by residues His117 and His121. Substrate contacts are provided by residues Leu140–Gly144, Asp173, Gly186, and Asn280. Fe cation is bound at residue Asp308.

The protein belongs to the KAE1 / TsaD family. Requires Fe(2+) as cofactor.

Its subcellular location is the cytoplasm. It carries out the reaction L-threonylcarbamoyladenylate + adenosine(37) in tRNA = N(6)-L-threonylcarbamoyladenosine(37) in tRNA + AMP + H(+). Required for the formation of a threonylcarbamoyl group on adenosine at position 37 (t(6)A37) in tRNAs that read codons beginning with adenine. Is involved in the transfer of the threonylcarbamoyl moiety of threonylcarbamoyl-AMP (TC-AMP) to the N6 group of A37, together with TsaE and TsaB. TsaD likely plays a direct catalytic role in this reaction. This Psychrobacter sp. (strain PRwf-1) protein is tRNA N6-adenosine threonylcarbamoyltransferase.